The following is a 324-amino-acid chain: CYFIP-related Rac1 interactor B (324 aa).

Residue Gly-2 is the site of N-myristoyl glycine attachment. Lys-74 participates in a covalent cross-link: Glycyl lysine isopeptide (Lys-Gly) (interchain with G-Cter in ubiquitin).

The protein belongs to the CYRI family. In terms of assembly, interacts with RAC1 (GTP-bound form preferentially). Ubiquitinated at Lys-74 upon Salmonella bacterial infection.

It localises to the membrane. Its subcellular location is the mitochondrion. Functionally, negatively regulates RAC1 signaling and RAC1-driven cytoskeletal remodeling. Regulates chemotaxis, cell migration and epithelial polarization by controlling the polarity, plasticity, duration and extent of protrusions. Limits Rac1 mediated activation of the Scar/WAVE complex, focuses protrusion signals and regulates pseudopod complexity by inhibiting Scar/WAVE-induced actin polymerization. Protects against Salmonella bacterial infection. Attenuates processes such as macropinocytosis, phagocytosis and cell migration and restrict sopE-mediated bacterial entry. Also restricts infection mediated by Mycobacterium tuberculosis and Listeria monocytogenes. Involved in the regulation of mitochondrial dynamics and oxidative stress. This is CYFIP-related Rac1 interactor B from Homo sapiens (Human).